We begin with the raw amino-acid sequence, 676 residues long: DNA-directed RNA polymerase subunit beta' (676 aa).

4 residues coordinate Zn(2+): Cys-69, Cys-71, Cys-87, and Cys-90. Positions 485, 487, and 489 each coordinate Mg(2+).

It belongs to the RNA polymerase beta' chain family. RpoC1 subfamily. In terms of assembly, in plastids the minimal PEP RNA polymerase catalytic core is composed of four subunits: alpha, beta, beta', and beta''. When a (nuclear-encoded) sigma factor is associated with the core the holoenzyme is formed, which can initiate transcription. Mg(2+) is required as a cofactor. The cofactor is Zn(2+).

The protein resides in the plastid. The protein localises to the chloroplast. The enzyme catalyses RNA(n) + a ribonucleoside 5'-triphosphate = RNA(n+1) + diphosphate. In terms of biological role, DNA-dependent RNA polymerase catalyzes the transcription of DNA into RNA using the four ribonucleoside triphosphates as substrates. This Fagopyrum esculentum subsp. ancestrale (Wild buckwheat) protein is DNA-directed RNA polymerase subunit beta'.